Here is a 472-residue protein sequence, read N- to C-terminus: Siroheme synthase 1 (472 aa).

The precorrin-2 dehydrogenase /sirohydrochlorin ferrochelatase stretch occupies residues 1–203 (MDYLPLFADL…GQLTEAENEL (203 aa)). Residues 22–23 (EV) and 43–44 (QT) each bind NAD(+). The residue at position 128 (serine 128) is a Phosphoserine. Residues 215-472 (GEVALVGAGP…AISPSVVNLA (258 aa)) form a uroporphyrinogen-III C-methyltransferase region. Proline 224 is an S-adenosyl-L-methionine binding site. The active-site Proton acceptor is the aspartate 247. Lysine 269 acts as the Proton donor in catalysis. S-adenosyl-L-methionine contacts are provided by residues 300-302 (GGD), isoleucine 305, 330-331 (TA), methionine 382, and glycine 411.

In the N-terminal section; belongs to the precorrin-2 dehydrogenase / sirohydrochlorin ferrochelatase family. This sequence in the C-terminal section; belongs to the precorrin methyltransferase family.

It catalyses the reaction uroporphyrinogen III + 2 S-adenosyl-L-methionine = precorrin-2 + 2 S-adenosyl-L-homocysteine + H(+). It carries out the reaction precorrin-2 + NAD(+) = sirohydrochlorin + NADH + 2 H(+). The enzyme catalyses siroheme + 2 H(+) = sirohydrochlorin + Fe(2+). It participates in cofactor biosynthesis; adenosylcobalamin biosynthesis; precorrin-2 from uroporphyrinogen III: step 1/1. Its pathway is cofactor biosynthesis; adenosylcobalamin biosynthesis; sirohydrochlorin from precorrin-2: step 1/1. The protein operates within porphyrin-containing compound metabolism; siroheme biosynthesis; precorrin-2 from uroporphyrinogen III: step 1/1. It functions in the pathway porphyrin-containing compound metabolism; siroheme biosynthesis; siroheme from sirohydrochlorin: step 1/1. It participates in porphyrin-containing compound metabolism; siroheme biosynthesis; sirohydrochlorin from precorrin-2: step 1/1. Functionally, multifunctional enzyme that catalyzes the SAM-dependent methylations of uroporphyrinogen III at position C-2 and C-7 to form precorrin-2 via precorrin-1. Then it catalyzes the NAD-dependent ring dehydrogenation of precorrin-2 to yield sirohydrochlorin. Finally, it catalyzes the ferrochelation of sirohydrochlorin to yield siroheme. The chain is Siroheme synthase 1 from Yersinia pestis bv. Antiqua (strain Nepal516).